A 199-amino-acid chain; its full sequence is MSENVIKETENKKNSRGRNWTFVLYPESAKAEWLEYLKELHIQFVVSPLHDRDTDTEGRMKKEHYHILVMYEGNKSYEQIKIITEELNATIPQIAGSVKGLVRYMLHMDDPNKFKYQKEDMIVYGGVDVDELLKKTTTDRYKLIKEMIEFIDEQGIVEFKSLMDYAMKFKFDDWFPLLCDNSAYVIQEYIKSNRYKSDR.

This sequence belongs to the Gram-positive plasmids replication protein type 2 family.

In terms of biological role, is essential for plasmid replication. Nicks the positive strand at the plus origin of replication. This is Replication protein (repF) from Staphylococcus aureus.